The primary structure comprises 478 residues: Glutamate--tRNA ligase (478 aa).

Positions 15–25 match the 'HIGH' region motif; the sequence is PSPTGFLHIGG. The short motif at 244-248 is the 'KMSKS' region element; it reads KLSKR. Lys-247 serves as a coordination point for ATP.

Belongs to the class-I aminoacyl-tRNA synthetase family. Glutamate--tRNA ligase type 1 subfamily. In terms of assembly, monomer.

The protein localises to the cytoplasm. It carries out the reaction tRNA(Glu) + L-glutamate + ATP = L-glutamyl-tRNA(Glu) + AMP + diphosphate. Catalyzes the attachment of glutamate to tRNA(Glu) in a two-step reaction: glutamate is first activated by ATP to form Glu-AMP and then transferred to the acceptor end of tRNA(Glu). The chain is Glutamate--tRNA ligase from Bradyrhizobium sp. (strain ORS 278).